The following is a 256-amino-acid chain: DNA repair protein RecO (256 aa).

The protein belongs to the RecO family.

Functionally, involved in DNA repair and RecF pathway recombination. The polypeptide is DNA repair protein RecO (Anaeromyxobacter sp. (strain Fw109-5)).